A 369-amino-acid chain; its full sequence is DNA replication and repair protein RecF (369 aa).

Position 30 to 37 (30 to 37) interacts with ATP; sequence GENGQGKT.

The protein belongs to the RecF family.

It is found in the cytoplasm. Its function is as follows. The RecF protein is involved in DNA metabolism; it is required for DNA replication and normal SOS inducibility. RecF binds preferentially to single-stranded, linear DNA. It also seems to bind ATP. This is DNA replication and repair protein RecF from Anaeromyxobacter sp. (strain Fw109-5).